The sequence spans 406 residues: Protrudin (406 aa).

The Cytoplasmic segment spans residues 1–71; that stretch reads MQAAERDGVA…AAEGVRALLR (71 aa). Residues 1-97 form a sufficient for homooligomerization region; it reads MQAAERDGVA…LLLTLDQAAW (97 aa). Residues 1-210 form a sufficient for localization to endoplasmic reticulum tubular network region; sequence MQAAERDGVA…LYLLPLCWVM (210 aa). A helical membrane pass occupies residues 72-92; the sequence is WQRPLCSLLVCLGLNFLLLTL. A topological domain (lumenal) is located at residue D93. A helical transmembrane segment spans residues 94–114; that stretch reads QAAWYSVLALLVLLPALLGYL. Over 115-192 the chain is Cytoplasmic; it reads QETYRVRPSE…NPTVSSQFYG (78 aa). An intramembrane region (helical) is located at residues 193–213; it reads ALLGSVCILYLLPLCWVMAIL. At 214-406 the chain is on the cytoplasmic side; sequence NSTLFLGNSQ…CAQCNQMLIK (193 aa). The disordered stretch occupies residues 239–295; sequence LGTKPLESAPEPAKPLPTDAPPDRTPTPTSTEDLTPGSVEEAEEAEPDEEFKDAIEE. The segment covering 250–263 has biased composition (pro residues); the sequence is PAKPLPTDAPPDRT. A compositionally biased stretch (acidic residues) spans 278–295; sequence EEAEEAEPDEEFKDAIEE. Residues 339–405 form an FYVE-type zinc finger; the sequence is SNNFGTCTGC…VCAQCNQMLI (67 aa). 8 residues coordinate Zn(2+): C345, C348, C361, C364, C369, C372, C397, and C400.

Can form homooligomers (monomers, dimers and tetramers).

The protein localises to the recycling endosome membrane. Its subcellular location is the endoplasmic reticulum membrane. It localises to the cell projection. The protein resides in the growth cone membrane. In terms of biological role, key regulator of RAB11-dependent vesicular trafficking during neurite extension through polarized membrane transport. Promotes axonal elongation and contributes to the establishment of neuronal cell polarity. Involved in nerve growth factor-induced neurite formation in VAPA-dependent manner. Contributes to both the formation and stabilization of the tubular ER network. Involved in ER morphogenesis by regulating the sheet-to-tubule balance and possibly the density of tubule interconnections. This is Protrudin (ZFYVE27) from Gallus gallus (Chicken).